The chain runs to 77 residues: Surfactant-associated protein 2 (77 aa).

Positions 1–19 (MESLMRLFLLLALLSSSHA) are cleaved as a signal peptide. Asparagine 61 is a glycosylation site (N-linked (GlcNAc...) asparagine).

Post-translationally, N-glycosylated. In terms of tissue distribution, expressed in lung, and specifically in alveolar type II epithelial cells.

The protein localises to the secreted. It is found in the cytoplasmic vesicle. It localises to the secretory vesicle. The protein resides in the golgi apparatus. Functionally, putative surfactant protein. This is Surfactant-associated protein 2 from Mus musculus (Mouse).